We begin with the raw amino-acid sequence, 1496 residues long: DNA-directed RNA polymerase subunit beta' (1496 aa).

Residues Cys-70, Cys-72, Cys-85, and Cys-88 each contribute to the Zn(2+) site. The Mg(2+) site is built by Asp-461, Asp-463, and Asp-465. Zn(2+) contacts are provided by Cys-908, Cys-982, Cys-989, and Cys-992. The disordered stretch occupies residues 1467–1496 (DKDMQVEGESEVPAIPPVAEGSAPEAPPAE).

Belongs to the RNA polymerase beta' chain family. In terms of assembly, the RNAP catalytic core consists of 2 alpha, 1 beta, 1 beta' and 1 omega subunit. When a sigma factor is associated with the core the holoenzyme is formed, which can initiate transcription. Requires Mg(2+) as cofactor. Zn(2+) is required as a cofactor.

The enzyme catalyses RNA(n) + a ribonucleoside 5'-triphosphate = RNA(n+1) + diphosphate. In terms of biological role, DNA-dependent RNA polymerase catalyzes the transcription of DNA into RNA using the four ribonucleoside triphosphates as substrates. The protein is DNA-directed RNA polymerase subunit beta' of Paramagnetospirillum magneticum (strain ATCC 700264 / AMB-1) (Magnetospirillum magneticum).